An 889-amino-acid chain; its full sequence is Vacuolar protein sorting-associated protein 54 (889 aa).

2 stretches are compositionally biased toward polar residues: residues methionine 1–leucine 14 and proline 30–aspartate 44. The tract at residues methionine 1–aspartate 44 is disordered. A phosphoserine mark is found at serine 69 and serine 72. A Phosphothreonine modification is found at threonine 74. Residues leucine 286–lysine 321 are a coiled coil. Basic and acidic residues predominate over residues histidine 729–glycine 744. The tract at residues histidine 729–tyrosine 748 is disordered.

The protein belongs to the VPS54 family. In terms of assembly, component of the Golgi-associated retrograde protein (GARP) complex, also called VFT (VPS fifty-three) complex, composed of VPS51, VPS52, VPS53 and VPS54. Also interacts with YPT6, TLG1, RBL2, SEC10, SEC15, EXO84 and ARL1.

It localises to the golgi apparatus. The protein resides in the trans-Golgi network membrane. The protein localises to the endosome membrane. Its subcellular location is the mitochondrion membrane. Involved in retrograde transport from early and late endosomes to late Golgi by linking the vesicle through the t-SNARE TGL1 to the Golgi, leading to the membrane fusion between late Golgi and endosomal vesicles. Also seems to be involved in protein transport from Golgi to the plasma membrane and is required for the integrity of the actin cytoskeleton. The protein is Vacuolar protein sorting-associated protein 54 (VPS54) of Saccharomyces cerevisiae (strain ATCC 204508 / S288c) (Baker's yeast).